A 319-amino-acid polypeptide reads, in one-letter code: Type II methyltransferase M.RsrI (319 aa).

Residues 1-10 (MANRSHHNAG) are compositionally biased toward basic residues. Positions 1–32 (MANRSHHNAGHRAMNALRKSGQKHSSESQLGS) are disordered.

This sequence belongs to the N(4)/N(6)-methyltransferase family.

It catalyses the reaction a 2'-deoxyadenosine in DNA + S-adenosyl-L-methionine = an N(6)-methyl-2'-deoxyadenosine in DNA + S-adenosyl-L-homocysteine + H(+). Strongly inhibited by N-ethylmaleimide, inactivated by MgCl(2) or MgSO(4). Its function is as follows. A beta subtype methylase, recognizes the double-stranded sequence 5'-GAATTC-3', methylates A-3 on both strands, and protects the DNA from cleavage by the RsrI endonuclease. In Cereibacter sphaeroides (Rhodobacter sphaeroides), this protein is Type II methyltransferase M.RsrI.